The sequence spans 833 residues: Leucine--tRNA ligase (833 aa).

A 'HIGH' region motif is present at residues 41-52 (PYPSGAGLHVGH). The short motif at 610 to 614 (KMSKS) is the 'KMSKS' region element. ATP is bound at residue Lys613.

Belongs to the class-I aminoacyl-tRNA synthetase family.

The protein localises to the cytoplasm. It carries out the reaction tRNA(Leu) + L-leucine + ATP = L-leucyl-tRNA(Leu) + AMP + diphosphate. In Streptococcus pyogenes serotype M2 (strain MGAS10270), this protein is Leucine--tRNA ligase.